A 180-amino-acid chain; its full sequence is Major urinary protein 17 (180 aa).

The signal sequence occupies residues 1–18 (MKMLLLLCLGLTLVCVHA). Cysteines 82 and 175 form a disulfide.

The protein belongs to the calycin superfamily. Lipocalin family. Because of their involvement in the coordination of social behavior, Mup proteins are thought to exhibit variable expression depending upon gender, age and status of the studied individuals. Expression may also be strain-specific: in strains C57BL/6J and 129S7, transcriptional support is lacking for Mup17.

The protein resides in the secreted. In terms of biological role, major urinary proteins (Mups) bind pheromones, thus stabilize them and allow slow release into the air from urine marks. May protect pheromones from oxidation. May also act as pheromones themselves. In this context, they play a role in the regulation of social behaviors, such as aggression, mating, pup-suckling, territory establishment and dominance. The chain is Major urinary protein 17 (Mup17) from Mus musculus (Mouse).